The chain runs to 335 residues: Anthranilate phosphoribosyltransferase (335 aa).

Residues Gly-79, 82-83 (GD), Thr-87, 89-92 (NIST), 107-115 (KHGNRSASS), and Ala-119 each bind 5-phospho-alpha-D-ribose 1-diphosphate. Gly-79 provides a ligand contact to anthranilate. Ser-91 is a Mg(2+) binding site. Asn-110 contacts anthranilate. Arg-165 contacts anthranilate. Mg(2+) contacts are provided by Asp-224 and Glu-225.

The protein belongs to the anthranilate phosphoribosyltransferase family. As to quaternary structure, homodimer. The cofactor is Mg(2+).

The enzyme catalyses N-(5-phospho-beta-D-ribosyl)anthranilate + diphosphate = 5-phospho-alpha-D-ribose 1-diphosphate + anthranilate. Its pathway is amino-acid biosynthesis; L-tryptophan biosynthesis; L-tryptophan from chorismate: step 2/5. Functionally, catalyzes the transfer of the phosphoribosyl group of 5-phosphorylribose-1-pyrophosphate (PRPP) to anthranilate to yield N-(5'-phosphoribosyl)-anthranilate (PRA). In Methanobrevibacter smithii (strain ATCC 35061 / DSM 861 / OCM 144 / PS), this protein is Anthranilate phosphoribosyltransferase.